We begin with the raw amino-acid sequence, 433 residues long: Keratin, type I cytoskeletal 17 (433 aa).

A disordered region spans residues 1–24 (MTTTIRQFTSSSSIKGSSGLGGGS). The segment at 1 to 83 (MTTTIRQFTS…GGVDGLLAGG (83 aa)) is head. Serine 12 and serine 13 each carry phosphoserine. Lysine 15 participates in a covalent cross-link: Glycyl lysine isopeptide (Lys-Gly) (interchain with G-Cter in SUMO1); alternate. Lysine 15 is covalently cross-linked (Glycyl lysine isopeptide (Lys-Gly) (interchain with G-Cter in SUMO2); alternate). Phosphoserine is present on residues serine 25, serine 32, serine 34, and serine 39. Phosphoserine; by RPS6KA1 is present on serine 44. Residues 84–120 (EKATMQNLNDRLASYLDKVRALEEANTELEVKIRDWY) are coil 1A. An IF rod domain is found at 84–395 (EKATMQNLND…RLLEGEDAHL (312 aa)). The residue at position 110 (threonine 110) is a Phosphothreonine. Residues 121–138 (QKQAPGPARDYSAYYQTI) form a linker 1 region. Positions 139 to 230 (EDLKNKILVA…NHEEEMNALR (92 aa)) are coil 1B. Residues 231–250 (GQVGGEINVEMDAAPGVDLS) are linker 12. The segment at 251–392 (RILSEMRDQY…TYRRLLEGED (142 aa)) is coil 2. A Glycyl lysine isopeptide (Lys-Gly) (interchain with G-Cter in SUMO2) cross-link involves residue lysine 278. Threonine 279 bears the Phosphothreonine mark. The residue at position 323 (serine 323) is a Phosphoserine. A tail region spans residues 393-433 (AHLTQYKPKEPVTTRQVRTIVEEVQDGKVISSREQVHQTTR). Glycyl lysine isopeptide (Lys-Gly) (interchain with G-Cter in SUMO1); alternate cross-links involve residues lysine 399, lysine 401, and lysine 420. Glycyl lysine isopeptide (Lys-Gly) (interchain with G-Cter in SUMO2); alternate cross-links involve residues lysine 399, lysine 401, and lysine 420.

Belongs to the intermediate filament family. As to quaternary structure, heterodimer of a type I and a type II keratin. KRT17 associates with KRT6 isomers (KRT6A or KRT6B). Interacts with TRADD and SFN. Post-translationally, phosphorylation at Ser-44 occurs in a growth- and stress-dependent fashion in skin keratinocytes, it has no effect on filament organization.

The protein resides in the cytoplasm. Its function is as follows. Type I keratin involved in the formation and maintenance of various skin appendages, specifically in determining shape and orientation of hair. Required for the correct growth of hair follicles, in particular for the persistence of the anagen (growth) state. Modulates the function of TNF-alpha in the specific context of hair cycling. Regulates protein synthesis and epithelial cell growth through binding to the adapter protein SFN and by stimulating Akt/mTOR pathway. Involved in tissue repair. May be a marker of basal cell differentiation in complex epithelia and therefore indicative of a certain type of epithelial 'stem cells'. Acts as a promoter of epithelial proliferation by acting a regulator of immune response in skin: promotes Th1/Th17-dominated immune environment contributing to the development of basaloid skin tumors. May act as an autoantigen in the immunopathogenesis of psoriasis, with certain peptide regions being a major target for autoreactive T-cells and hence causing their proliferation. This Rattus norvegicus (Rat) protein is Keratin, type I cytoskeletal 17.